The primary structure comprises 85 residues: YcgL domain-containing protein PC1_1941 (85 aa).

In terms of domain architecture, YcgL spans 1–85; it reads MFCVIYRSAK…PVENLLNTPV (85 aa).

The polypeptide is YcgL domain-containing protein PC1_1941 (Pectobacterium carotovorum subsp. carotovorum (strain PC1)).